A 171-amino-acid chain; its full sequence is 3-hydroxydecanoyl-[acyl-carrier-protein] dehydratase (171 aa).

His-70 is an active-site residue.

The protein belongs to the thioester dehydratase family. FabA subfamily. In terms of assembly, homodimer.

The protein localises to the cytoplasm. The enzyme catalyses a (3R)-hydroxyacyl-[ACP] = a (2E)-enoyl-[ACP] + H2O. It carries out the reaction (3R)-hydroxydecanoyl-[ACP] = (2E)-decenoyl-[ACP] + H2O. It catalyses the reaction (2E)-decenoyl-[ACP] = (3Z)-decenoyl-[ACP]. Its pathway is lipid metabolism; fatty acid biosynthesis. Necessary for the introduction of cis unsaturation into fatty acids. Catalyzes the dehydration of (3R)-3-hydroxydecanoyl-ACP to E-(2)-decenoyl-ACP and then its isomerization to Z-(3)-decenoyl-ACP. Can catalyze the dehydratase reaction for beta-hydroxyacyl-ACPs with saturated chain lengths up to 16:0, being most active on intermediate chain length. This Nitrosococcus oceani (strain ATCC 19707 / BCRC 17464 / JCM 30415 / NCIMB 11848 / C-107) protein is 3-hydroxydecanoyl-[acyl-carrier-protein] dehydratase.